Consider the following 533-residue polypeptide: Spindle pole body protein CSA6 (533 aa).

Disordered regions lie at residues 1-32 (MEDS…SDLT) and 53-130 (DKYD…QEDE). Composition is skewed to basic and acidic residues over residues 18–30 (PEIK…KTSD) and 53–68 (DKYD…DLTP). The span at 83-94 (PSKFSSSIPQKP) shows a compositional bias: low complexity. The span at 103–121 (SSPTKNYTDHINQLRSGPN) shows a compositional bias: polar residues. Positions 136–236 (KYEIKRLKQE…RSERDELVKD (101 aa)) form a coiled coil. The span at 309 to 318 (EKDKPSEDKT) shows a compositional bias: basic and acidic residues. Disordered regions lie at residues 309 to 329 (EKDK…SKDA) and 349 to 453 (SANS…QSTK). Composition is skewed to polar residues over residues 349-392 (SANS…SNSQ) and 405-421 (IYSS…QSSH). A compositionally biased stretch (basic and acidic residues) spans 432 to 445 (PRVERDHWTDRPPS).

It localises to the cytoplasm. The protein resides in the cytoskeleton. The protein localises to the microtubule organizing center. It is found in the spindle pole body. Plays a role in mitotic spindle pole body organization, possibly at the point of spindle pole body separation. Required for mitotic exit. In Candida dubliniensis (strain CD36 / ATCC MYA-646 / CBS 7987 / NCPF 3949 / NRRL Y-17841) (Yeast), this protein is Spindle pole body protein CSA6.